Here is a 214-residue protein sequence, read N- to C-terminus: Orotate phosphoribosyltransferase (214 aa).

5-phospho-alpha-D-ribose 1-diphosphate is bound by residues Arg-125, Lys-126, Lys-129, His-131, and Glu-151–Ser-159. Residues Thr-155 and Arg-183 each contribute to the orotate site.

The protein belongs to the purine/pyrimidine phosphoribosyltransferase family. PyrE subfamily. In terms of assembly, homodimer. It depends on Mg(2+) as a cofactor.

The catalysed reaction is orotidine 5'-phosphate + diphosphate = orotate + 5-phospho-alpha-D-ribose 1-diphosphate. The protein operates within pyrimidine metabolism; UMP biosynthesis via de novo pathway; UMP from orotate: step 1/2. Catalyzes the transfer of a ribosyl phosphate group from 5-phosphoribose 1-diphosphate to orotate, leading to the formation of orotidine monophosphate (OMP). The polypeptide is Orotate phosphoribosyltransferase (Tropheryma whipplei (strain TW08/27) (Whipple's bacillus)).